A 429-amino-acid chain; its full sequence is Homocysteine synthase (429 aa).

An N6-(pyridoxal phosphate)lysine modification is found at lysine 210.

This sequence belongs to the trans-sulfuration enzymes family. As to quaternary structure, homotetramer. It depends on pyridoxal 5'-phosphate as a cofactor.

It is found in the cytoplasm. The protein localises to the nucleus. It carries out the reaction O-acetyl-L-homoserine + methanethiol = L-methionine + acetate + H(+). The catalysed reaction is O-acetyl-L-homoserine + hydrogen sulfide = L-homocysteine + acetate. It participates in amino-acid biosynthesis; L-methionine biosynthesis via de novo pathway; L-homocysteine from O-acetyl-L-homoserine. In terms of biological role, catalyzes the conversion of O-acetyl-L-homoserine (OAH) into homocysteine in the methionine biosynthesis pathway. Can also use O-succinyl-L-homoserine and L-homoserine as substrates. Also has cysteine synthase (O-acetylserine sulfhydrylase) activity in vitro, but in S.pombe, it seems only to be involved in the alternative pathway of methionine biosynthesis under cysteine deficiency conditions. The protein is Homocysteine synthase of Schizosaccharomyces pombe (strain 972 / ATCC 24843) (Fission yeast).